The following is a 78-amino-acid chain: Calcium/calmodulin-dependent protein kinase II inhibitor 1 (78 aa).

Positions 41–68 (NKRPPKLGQIGRSKRVVIEDDRIDDVLK) are CAMK2 inhibitory domain.

The protein belongs to the CAMK2N family. Interacts with CAMK2B; the presence of Ca(2+)/calmodulin increases the interaction but is not essential. Interacts with CAMK2A; this interaction requires CAMK2A activation by Ca(2+).

The protein resides in the synapse. The protein localises to the cell projection. It localises to the dendrite. It is found in the postsynaptic density. In terms of biological role, potent and specific inhibitor of CaM-kinase II (CAMK2). Plays a role in the maintenance of long-term retrieval-induced memory in response to contextual fear. Modulates blood pressure and vascular reactivity via regulation of CAMK2 activity in addition to regulation of left ventricular mass. Mediates the NLRP3 inflammasome in cardiomyocytes via acting as an inhibitor of the MAPK14/p38 and MAPK8/JNK pathways, thereby regulating ventricular remodeling and cardiac rhythm post-myocardial infarction. Negatively effects insulin sensitivity and promotes lipid formation in adipose tissues independent of CAMK2 signaling. This chain is Calcium/calmodulin-dependent protein kinase II inhibitor 1 (CAMK2N1), found in Bos taurus (Bovine).